The following is a 179-amino-acid chain: Large ribosomal subunit protein uL5 (179 aa).

This sequence belongs to the universal ribosomal protein uL5 family. In terms of assembly, part of the 50S ribosomal subunit; part of the 5S rRNA/L5/L18/L25 subcomplex. Contacts the 5S rRNA and the P site tRNA. Forms a bridge to the 30S subunit in the 70S ribosome.

Its function is as follows. This is one of the proteins that bind and probably mediate the attachment of the 5S RNA into the large ribosomal subunit, where it forms part of the central protuberance. In the 70S ribosome it contacts protein S13 of the 30S subunit (bridge B1b), connecting the 2 subunits; this bridge is implicated in subunit movement. Contacts the P site tRNA; the 5S rRNA and some of its associated proteins might help stabilize positioning of ribosome-bound tRNAs. The polypeptide is Large ribosomal subunit protein uL5 (Prochlorococcus marinus (strain NATL1A)).